The primary structure comprises 65 residues: Large ribosomal subunit protein bL35 (65 aa).

Belongs to the bacterial ribosomal protein bL35 family.

The polypeptide is Large ribosomal subunit protein bL35 (Thermotoga petrophila (strain ATCC BAA-488 / DSM 13995 / JCM 10881 / RKU-1)).